The primary structure comprises 278 residues: uncharacterized protein (278 aa).

10 consecutive transmembrane segments (helical) span residues 1-21 (MLEI…GIAY), 30-50 (AFTA…PLAL), 56-76 (VVID…SFYI), 92-112 (IALP…TVIY), 116-136 (LSLN…IIYG), 146-166 (LFYA…LDFL), 170-190 (LPVS…LSFT), 209-229 (GIFL…SSSW), 230-250 (NVVQ…AIFL), and 258-278 (LVAG…PPLQ). EamA domains lie at 12–136 (ICWA…IIYG) and 154–274 (FSWA…LLLL).

This sequence belongs to the EamA transporter family.

It localises to the cell membrane. This is an uncharacterized protein from Archaeoglobus fulgidus (strain ATCC 49558 / DSM 4304 / JCM 9628 / NBRC 100126 / VC-16).